The following is a 744-amino-acid chain: ATP-dependent zinc metalloprotease FtsH (744 aa).

At 1–16 (MQDQNNSNTPKKKKLS) the chain is on the cytoplasmic side. The helical transmembrane segment at 17–37 (FWGIIGIVASILVLLVIAYII) threads the bilayer. Residues 38–177 (YYYVSQTTVL…ESIWSTVLRY (140 aa)) are Extracellular-facing. Residues 178–198 (GTNIIFLLLFAASFIFMFMSF) traverse the membrane as a helical segment. The Cytoplasmic portion of the chain corresponds to 199–744 (RSQRGTGGLL…EEKSKDEKNN (546 aa)). 264 to 271 (GPPGTGKT) contributes to the ATP binding site. Zn(2+) is bound at residue His-486. Residue Glu-487 is part of the active site. Residues His-490 and Asp-564 each coordinate Zn(2+). The interval 722–744 (IEANKSSSKSTVNEEKSKDEKNN) is disordered. Residues 733–744 (VNEEKSKDEKNN) show a composition bias toward basic and acidic residues.

In the central section; belongs to the AAA ATPase family. It in the C-terminal section; belongs to the peptidase M41 family. Homohexamer. The cofactor is Zn(2+).

It is found in the cell membrane. Functionally, acts as a processive, ATP-dependent zinc metallopeptidase for both cytoplasmic and membrane proteins. Plays a role in the quality control of integral membrane proteins. The polypeptide is ATP-dependent zinc metalloprotease FtsH (Metamycoplasma arthritidis (strain 158L3-1) (Mycoplasma arthritidis)).